Reading from the N-terminus, the 2131-residue chain is Sodium channel protein para (2131 aa).

The Cytoplasmic segment spans residues methionine 1–tyrosine 148. Over residues histidine 35–glycine 48 the composition is skewed to basic and acidic residues. Positions histidine 35–proline 84 are disordered. Residues tyrosine 64–proline 73 are compositionally biased toward acidic residues. The I repeat unit spans residues tryptophan 134–arginine 467. A helical membrane pass occupies residues isoleucine 149–methionine 172. Topologically, residues proline 173–serine 180 are extracellular. The chain crosses the membrane as a helical span at residues threonine 181–alanine 199. Topologically, residues arginine 200–aspartate 212 are cytoplasmic. The helical transmembrane segment at alanine 213–isoleucine 231 threads the bilayer. Topologically, residues aspartate 232–alanine 237 are extracellular. The helical; Voltage-sensor transmembrane segment at alanine 238–leucine 257 threads the bilayer. At lysine 258–aspartate 273 the chain is on the cytoplasmic side. Residues valine 274–leucine 297 traverse the membrane as a helical segment. At threonine 298–serine 373 the chain is on the extracellular side. A disulfide bridge connects residues cysteine 301 and cysteine 350. Residues asparagine 313, asparagine 325, and asparagine 343 are each glycosylated (N-linked (GlcNAc...) asparagine). Residues phenylalanine 374–leucine 398 constitute an intramembrane region (pore-forming). At arginine 399–histidine 405 the chain is on the extracellular side. Residues methionine 406–isoleucine 427 form a helical membrane-spanning segment. At valine 428 to serine 812 the chain is on the cytoplasmic side. Phosphoserine; by PKA occurs at positions 553 and 570. Disordered stretches follow at residues serine 553–serine 572 and lysine 671–glycine 691. The segment covering threonine 680–glycine 691 has biased composition (polar residues). Residues aspartate 799 to arginine 1069 form an II repeat. Residues leucine 813–methionine 837 form a helical membrane-spanning segment. Residues aspartate 838–arginine 848 are Extracellular-facing. A helical membrane pass occupies residues valine 849–serine 873. Topologically, residues proline 874–glutamate 880 are cytoplasmic. Residues glycine 881–glutamate 900 traverse the membrane as a helical segment. Over glycine 901 to serine 906 the chain is Extracellular. Residues valine 907–leucine 926 form a helical; Voltage-sensor membrane-spanning segment. Residues asparagine 927–glycine 941 lie on the Cytoplasmic side of the membrane. Residues asparagine 942–glycine 963 form a helical membrane-spanning segment. The Extracellular portion of the chain corresponds to lysine 964–aspartate 985. Residue asparagine 982 is glycosylated (N-linked (GlcNAc...) asparagine). The segment at residues phenylalanine 986–tryptophan 1006 is an intramembrane region (pore-forming). The Extracellular portion of the chain corresponds to aspartate 1007–aspartate 1013. Cysteine 1008 and cysteine 1016 are joined by a disulfide. The helical transmembrane segment at valine 1014–serine 1041 threads the bilayer. Over asparagine 1042–glutamine 1296 the chain is Cytoplasmic. Residues aspartate 1166–glycine 1240 are disordered. Polar residues predominate over residues tyrosine 1177–serine 1194. The segment covering proline 1199–leucine 1225 has biased composition (basic and acidic residues). Over residues glycine 1226–glycine 1240 the composition is skewed to acidic residues. The III repeat unit spans residues tryptophan 1284–lysine 1591. A helical transmembrane segment spans residues leucine 1297–leucine 1320. At glutamate 1321 to isoleucine 1334 the chain is on the extracellular side. The helical transmembrane segment at leucine 1335–phenylalanine 1359 threads the bilayer. The Cytoplasmic portion of the chain corresponds to lysine 1360–asparagine 1365. The chain crosses the membrane as a helical span at residues alanine 1366–valine 1387. Residues glycine 1388–glycine 1391 are Extracellular-facing. A helical; Voltage-sensor membrane pass occupies residues isoleucine 1392–methionine 1413. Over glutamine 1414 to asparagine 1432 the chain is Cytoplasmic. Residues valine 1433–glycine 1454 traverse the membrane as a helical segment. At lysine 1455–valine 1495 the chain is on the extracellular side. 2 N-linked (GlcNAc...) asparagine glycosylation sites follow: asparagine 1463 and asparagine 1482. An intramembrane region (pore-forming) is located at residues glycine 1496–aspartate 1517. The Extracellular segment spans residues alanine 1518–asparagine 1533. Residues isoleucine 1534–isoleucine 1560 traverse the membrane as a helical segment. The Cytoplasmic segment spans residues aspartate 1561–glutamate 1614. Residues isoleucine 1601–asparagine 1862 form an IV repeat. Residues isoleucine 1615–leucine 1638 traverse the membrane as a helical segment. Residues aspartate 1639–alanine 1649 lie on the Extracellular side of the membrane. The chain crosses the membrane as a helical span at residues valine 1650 to leucine 1673. Residues arginine 1674–isoleucine 1679 are Cytoplasmic-facing. Residues glutamate 1680–isoleucine 1703 form a helical membrane-spanning segment. Residues glutamate 1704–leucine 1713 are Extracellular-facing. The chain crosses the membrane as a helical; Voltage-sensor span at residues arginine 1714–arginine 1735. The Cytoplasmic portion of the chain corresponds to threonine 1736–asparagine 1750. A helical transmembrane segment spans residues isoleucine 1751–valine 1773. Residues lysine 1774–threonine 1787 lie on the Extracellular side of the membrane. Residues phenylalanine 1788–alanine 1810 constitute an intramembrane region (pore-forming). Residues isoleucine 1811–valine 1835 lie on the Extracellular side of the membrane. The helical transmembrane segment at glycine 1836–leucine 1860 threads the bilayer. The Cytoplasmic segment spans residues glutamate 1861 to valine 2131. Residues aspartate 1877–proline 1912 form the EF-hand domain. The interval histidine 2001–arginine 2096 is disordered. Over residues glycine 2021 to aspartate 2035 the composition is skewed to acidic residues. The span at alanine 2068 to serine 2088 shows a compositional bias: low complexity.

It belongs to the sodium channel (TC 1.A.1.10) family. Para subfamily.

It is found in the cell membrane. Mediates the voltage-dependent sodium ion permeability of excitable membranes. Assuming opened or closed conformations in response to the voltage difference across the membrane, the protein forms a sodium-selective channel through which Na(+) ions may pass in accordance with their electrochemical gradient. This Drosophila melanogaster (Fruit fly) protein is Sodium channel protein para (para).